The chain runs to 330 residues: Glycerol-3-phosphate dehydrogenase [NAD(P)+] (330 aa).

4 residues coordinate NADPH: serine 10, tryptophan 11, arginine 31, and lysine 105. 3 residues coordinate sn-glycerol 3-phosphate: lysine 105, glycine 135, and serine 137. Residue alanine 139 participates in NADPH binding. Positions 190, 243, 253, 254, and 255 each coordinate sn-glycerol 3-phosphate. Residue lysine 190 is the Proton acceptor of the active site. Arginine 254 is a binding site for NADPH. NADPH contacts are provided by valine 278 and glutamate 280.

The protein belongs to the NAD-dependent glycerol-3-phosphate dehydrogenase family.

It localises to the cytoplasm. The catalysed reaction is sn-glycerol 3-phosphate + NAD(+) = dihydroxyacetone phosphate + NADH + H(+). The enzyme catalyses sn-glycerol 3-phosphate + NADP(+) = dihydroxyacetone phosphate + NADPH + H(+). It participates in membrane lipid metabolism; glycerophospholipid metabolism. Functionally, catalyzes the reduction of the glycolytic intermediate dihydroxyacetone phosphate (DHAP) to sn-glycerol 3-phosphate (G3P), the key precursor for phospholipid synthesis. The polypeptide is Glycerol-3-phosphate dehydrogenase [NAD(P)+] (Solidesulfovibrio magneticus (strain ATCC 700980 / DSM 13731 / RS-1) (Desulfovibrio magneticus)).